The chain runs to 219 residues: Germin-like protein subfamily 2 member 1 (219 aa).

A signal peptide spans 1–21 (MASPTLTLLLLLTTVSFFISS). A disulfide bridge links Cys-32 with Cys-47. The region spanning 61 to 209 (QGLAKPGLTN…AFQTSPGTVK (149 aa)) is the Cupin type-1 domain. An N-linked (GlcNAc...) asparagine glycan is attached at Asn-70. The Mn(2+) site is built by His-109, His-111, Glu-116, and His-155.

It belongs to the germin family. Oligomer (believed to be a pentamer but probably hexamer).

It localises to the secreted. It is found in the extracellular space. Its subcellular location is the apoplast. Functionally, may play a role in plant defense. Probably has no oxalate oxidase activity even if the active site is conserved. The protein is Germin-like protein subfamily 2 member 1 (GLP4) of Arabidopsis thaliana (Mouse-ear cress).